A 247-amino-acid chain; its full sequence is ATP synthase subunit a, chloroplastic (247 aa).

Helical transmembrane passes span 38 to 58 (QVLI…TVAV), 95 to 115 (VPFI…GALL), 134 to 154 (INTT…AGLT), 199 to 219 (LVVV…VMFL), and 220 to 240 (GLFT…AYIG).

Belongs to the ATPase A chain family. As to quaternary structure, F-type ATPases have 2 components, CF(1) - the catalytic core - and CF(0) - the membrane proton channel. CF(1) has five subunits: alpha(3), beta(3), gamma(1), delta(1), epsilon(1). CF(0) has four main subunits: a, b, b' and c.

It localises to the plastid. The protein localises to the chloroplast thylakoid membrane. In terms of biological role, key component of the proton channel; it plays a direct role in the translocation of protons across the membrane. In Platanus occidentalis (Sycamore), this protein is ATP synthase subunit a, chloroplastic.